A 263-amino-acid polypeptide reads, in one-letter code: Phosphatidylglycerol--prolipoprotein diacylglyceryl transferase (263 aa).

Helical transmembrane passes span 15–35 (ISIH…VYLA), 52–72 (FILL…VIFQ), 83–103 (IFAI…GAAV), and 112–132 (AIAV…AQSI). Residue Arg-134 participates in a 1,2-diacyl-sn-glycero-3-phospho-(1'-sn-glycerol) binding. The next 3 membrane-spanning stretches (helical) occupy residues 170 to 190 (VPTF…ILGL), 200 to 220 (GDVT…IEGM), and 230 to 250 (LRVS…LLYF).

This sequence belongs to the Lgt family.

The protein localises to the cell membrane. The catalysed reaction is L-cysteinyl-[prolipoprotein] + a 1,2-diacyl-sn-glycero-3-phospho-(1'-sn-glycerol) = an S-1,2-diacyl-sn-glyceryl-L-cysteinyl-[prolipoprotein] + sn-glycerol 1-phosphate + H(+). Its pathway is protein modification; lipoprotein biosynthesis (diacylglyceryl transfer). Its function is as follows. Catalyzes the transfer of the diacylglyceryl group from phosphatidylglycerol to the sulfhydryl group of the N-terminal cysteine of a prolipoprotein, the first step in the formation of mature lipoproteins. The chain is Phosphatidylglycerol--prolipoprotein diacylglyceryl transferase from Streptococcus thermophilus (strain ATCC BAA-250 / LMG 18311).